Consider the following 209-residue polypeptide: Thiamine-phosphate synthase (209 aa).

4-amino-2-methyl-5-(diphosphooxymethyl)pyrimidine contacts are provided by residues 36-40 and Asn68; that span reads QYRDK. Asp69 and Asp87 together coordinate Mg(2+). Residue Thr106 coordinates 4-amino-2-methyl-5-(diphosphooxymethyl)pyrimidine. 133 to 135 serves as a coordination point for 2-[(2R,5Z)-2-carboxy-4-methylthiazol-5(2H)-ylidene]ethyl phosphate; sequence SST. Lys136 serves as a coordination point for 4-amino-2-methyl-5-(diphosphooxymethyl)pyrimidine. Residue Gly163 coordinates 2-[(2R,5Z)-2-carboxy-4-methylthiazol-5(2H)-ylidene]ethyl phosphate.

This sequence belongs to the thiamine-phosphate synthase family. Mg(2+) serves as cofactor.

The catalysed reaction is 2-[(2R,5Z)-2-carboxy-4-methylthiazol-5(2H)-ylidene]ethyl phosphate + 4-amino-2-methyl-5-(diphosphooxymethyl)pyrimidine + 2 H(+) = thiamine phosphate + CO2 + diphosphate. The enzyme catalyses 2-(2-carboxy-4-methylthiazol-5-yl)ethyl phosphate + 4-amino-2-methyl-5-(diphosphooxymethyl)pyrimidine + 2 H(+) = thiamine phosphate + CO2 + diphosphate. It carries out the reaction 4-methyl-5-(2-phosphooxyethyl)-thiazole + 4-amino-2-methyl-5-(diphosphooxymethyl)pyrimidine + H(+) = thiamine phosphate + diphosphate. It participates in cofactor biosynthesis; thiamine diphosphate biosynthesis; thiamine phosphate from 4-amino-2-methyl-5-diphosphomethylpyrimidine and 4-methyl-5-(2-phosphoethyl)-thiazole: step 1/1. Functionally, condenses 4-methyl-5-(beta-hydroxyethyl)thiazole monophosphate (THZ-P) and 2-methyl-4-amino-5-hydroxymethyl pyrimidine pyrophosphate (HMP-PP) to form thiamine monophosphate (TMP). This Azotobacter vinelandii (strain DJ / ATCC BAA-1303) protein is Thiamine-phosphate synthase.